Consider the following 163-residue polypeptide: NAD(P)H-quinone oxidoreductase subunit I, chloroplastic (163 aa).

4Fe-4S ferredoxin-type domains lie at 55–84 (GRIH…VDWK) and 95–124 (LNYS…MTEE). [4Fe-4S] cluster contacts are provided by Cys-64, Cys-67, Cys-70, Cys-74, Cys-104, Cys-107, Cys-110, and Cys-114.

Belongs to the complex I 23 kDa subunit family. As to quaternary structure, NDH is composed of at least 16 different subunits, 5 of which are encoded in the nucleus. The cofactor is [4Fe-4S] cluster.

The protein resides in the plastid. The protein localises to the chloroplast thylakoid membrane. The enzyme catalyses a plastoquinone + NADH + (n+1) H(+)(in) = a plastoquinol + NAD(+) + n H(+)(out). The catalysed reaction is a plastoquinone + NADPH + (n+1) H(+)(in) = a plastoquinol + NADP(+) + n H(+)(out). In terms of biological role, NDH shuttles electrons from NAD(P)H:plastoquinone, via FMN and iron-sulfur (Fe-S) centers, to quinones in the photosynthetic chain and possibly in a chloroplast respiratory chain. The immediate electron acceptor for the enzyme in this species is believed to be plastoquinone. Couples the redox reaction to proton translocation, and thus conserves the redox energy in a proton gradient. This chain is NAD(P)H-quinone oxidoreductase subunit I, chloroplastic, found in Glycine max (Soybean).